We begin with the raw amino-acid sequence, 649 residues long: Vitamin K-dependent protein S (649 aa).

The propeptide occupies 1–14; that stretch reads SKQQASQVLVRKRR. Positions 15–60 constitute a Gla domain; it reads ANSMLEETKQGNLERECIEELCNKEEAREVFENDPETDYFYPKYLV. 11 positions are modified to 4-carboxyglutamate: Glu-20, Glu-21, Glu-28, Glu-30, Glu-33, Glu-34, Glu-39, Glu-40, Glu-43, Glu-46, and Glu-50. Residues Cys-31 and Cys-36 are joined by a disulfide bond. The interval 61–89 is thrombin-sensitive; that stretch reads CLRSFQSGLFTAARQSTDAYPDLRSCVNA. Residues 90 to 128 form the EGF-like 1 domain; the sequence is IPDQCSPLPCNEDGYMSCKDGKASFTCTCKPGWQGERCE. Disulfide bonds link Cys-94-Cys-107, Cys-99-Cys-116, Cys-118-Cys-127, Cys-134-Cys-148, Cys-144-Cys-157, Cys-159-Cys-172, Cys-178-Cys-190, Cys-185-Cys-199, Cys-201-Cys-214, Cys-220-Cys-229, Cys-225-Cys-238, Cys-240-Cys-255, and Cys-422-Cys-448. Residue Asp-109 is modified to (3R)-3-hydroxyaspartate. Residues 130-173 form the EGF-like 2; calcium-binding domain; the sequence is DINECKDPSNINGGCSQICDNTPGSYHCSCKSGFVMLSNKKDCK. The region spanning 174–215 is the EGF-like 3; calcium-binding domain; it reads DVDECSLKPNMCGTAVCKNIPGDFECECPEGYRYNLKSKSCE. The region spanning 216–256 is the EGF-like 4; calcium-binding domain; sequence DVDECSENMCAQLCVNYPGGYTCYCDGKKGFKLAQDQKSCE. 2 consecutive Laminin G-like domains span residues 272-448 and 457-639; these read LLYL…NKHC and YYPG…AHSC. Asn-472, Asn-482, and Asn-503 each carry an N-linked (GlcNAc...) asparagine glycan. Residues Cys-612 and Cys-639 are joined by a disulfide bond.

Post-translationally, the iron and 2-oxoglutarate dependent 3-hydroxylation of aspartate and asparagine is (R) stereospecific within EGF domains. Plasma.

It is found in the secreted. Anticoagulant plasma protein; it is a cofactor to activated protein C in the degradation of coagulation factors Va and VIIIa. It helps to prevent coagulation and stimulating fibrinolysis. The sequence is that of Vitamin K-dependent protein S (PROS1) from Macaca mulatta (Rhesus macaque).